Consider the following 345-residue polypeptide: Protein lifeguard 1 (345 aa).

Positions 1–115 are disordered; that stretch reads MSHEKSFLVS…GNYQEEGPPS (115 aa). 2 stretches are compositionally biased toward pro residues: residues 24–46 and 79–98; these read APMPPYVQAPYPGAPYPQAPFQP and GPYPQSPFPPNPYGQPPPFQ. Helical transmembrane passes span 139-159, 171-191, 202-222, 227-247, 257-277, 281-301, and 320-340; these read VFLVLTLQLSVTLSTVAIFTF, VWTYYVSYAIFFISLIVLSCC, LVALSILTVSLSYMVGMIASF, AVIMAVGITTAVCFTVVIFSM, MGVLLVSVVVLFIFAILCIFI, ILEIVYASLGALLFTCFLAVD, and FAALNLYTDIINIFLYILTII.

The protein belongs to the BI1 family. LFG subfamily.

Its subcellular location is the membrane. Its function is as follows. Potential apoptotic regulator. The protein is Protein lifeguard 1 (Grina) of Mus musculus (Mouse).